Consider the following 339-residue polypeptide: DNA-directed RNA polymerase subunit alpha (339 aa).

The alpha N-terminal domain (alpha-NTD) stretch occupies residues 1–233 (MVREEVAGST…DLFLPFLHAE (233 aa)). The segment at 266 to 339 (GIPLNCIFID…IDLLKNKLSF (74 aa)) is alpha C-terminal domain (alpha-CTD).

This sequence belongs to the RNA polymerase alpha chain family. In plastids the minimal PEP RNA polymerase catalytic core is composed of four subunits: alpha, beta, beta', and beta''. When a (nuclear-encoded) sigma factor is associated with the core the holoenzyme is formed, which can initiate transcription.

The protein resides in the plastid. The protein localises to the chloroplast. The enzyme catalyses RNA(n) + a ribonucleoside 5'-triphosphate = RNA(n+1) + diphosphate. In terms of biological role, DNA-dependent RNA polymerase catalyzes the transcription of DNA into RNA using the four ribonucleoside triphosphates as substrates. This chain is DNA-directed RNA polymerase subunit alpha, found in Psathyrostachys juncea (Russian wildrye).